A 485-amino-acid polypeptide reads, in one-letter code: MVGVTPQSGKPRTLAEKVWDDHVVRTAAEGEPDLLFIDLHLLHEVTSPQAFDGLRMAGRRVRRTDLTLATEDHNTPTGYADPSFNTRRGELLTIADTVSRTQIETLRKNCAEFGVEIRPLGDVNQGIVHVIGPQLGLTQPGMTIVCGDSHTATHGASGALAFGIGTSEVEHVLATQTLPQSKPKTMAVTVVGELRPGVSAKDLILTLITQTGTGGGNGHIVEYRGEAIRKLSMEGRMTICNMSIEWGAKAGMIAPDETTFDYLSGRKHARRGADWDAAVAYWKTLATDEGAEYDTEIILDASKISPFITWGTNPGQGAALDGVVPDPQDFLDEVERGAAERALAYMGLTPGTPFRDVPVDVVFVGSCTNGRLEDLRAAADVIRGRKVADGVRMMIVPGSYQVREQAEAEGLDKIFIDAGAEWRFAGCSMCLGMNPDTLSPGQRAASTSNRNFEGRQGKGGRTHLVSPQVAAATAVVGKLAAPADL.

Positions 367, 427, and 430 each coordinate [4Fe-4S] cluster. A compositionally biased stretch (polar residues) spans 439-451; it reads SPGQRAASTSNRN. A disordered region spans residues 439–462; that stretch reads SPGQRAASTSNRNFEGRQGKGGRT.

It belongs to the aconitase/IPM isomerase family. LeuC type 1 subfamily. Heterodimer of LeuC and LeuD. It depends on [4Fe-4S] cluster as a cofactor.

The catalysed reaction is (2R,3S)-3-isopropylmalate = (2S)-2-isopropylmalate. The protein operates within amino-acid biosynthesis; L-leucine biosynthesis; L-leucine from 3-methyl-2-oxobutanoate: step 2/4. Catalyzes the isomerization between 2-isopropylmalate and 3-isopropylmalate, via the formation of 2-isopropylmaleate. The protein is 3-isopropylmalate dehydratase large subunit of Actinoplanes teichomyceticus.